The following is a 309-amino-acid chain: Probable pathogenesis-related protein ARB_02861 (309 aa).

Residues M1–A17 form the signal peptide. Over residues C47 to E59 the composition is skewed to low complexity. Residues C47 to E152 form a disordered region. Pro residues-rich tracts occupy residues T61–E92 and A99–G147. The SCP domain maps to A154–Y284. N164 carries an N-linked (GlcNAc...) asparagine glycan.

The protein belongs to the CRISP family.

It is found in the secreted. Functionally, secreted protein required for efficient export of lipids such as acetylated sterols. Acts in detoxification of hydrophobic compounds. The polypeptide is Probable pathogenesis-related protein ARB_02861 (Arthroderma benhamiae (strain ATCC MYA-4681 / CBS 112371) (Trichophyton mentagrophytes)).